The following is a 210-amino-acid chain: MAKLLYVTCNLKPTEFSCSLSVGKKFLDEYLRQNPADEVYFLDLYRDNIQRIDADVLSGWGKMRNGESFASLTTDEQRKVGHIWKHADQFIAADKYVFVTPMFNLGFPAELKMYIDAVCVVGKTFAYTPTGPVGLLKDQGRKCLHIHSSGGFHFGKEEDHSVPYLKSIMGFMGIEDFESIVVEGVDAIPDRAESFKGAAVEKARGVASQF.

FMN contacts are provided by residues Ser17–Ser19 and Ser148–Gly151.

Belongs to the azoreductase type 1 family. In terms of assembly, homodimer. FMN is required as a cofactor.

It catalyses the reaction 2 a quinone + NADH + H(+) = 2 a 1,4-benzosemiquinone + NAD(+). The enzyme catalyses N,N-dimethyl-1,4-phenylenediamine + anthranilate + 2 NAD(+) = 2-(4-dimethylaminophenyl)diazenylbenzoate + 2 NADH + 2 H(+). Quinone reductase that provides resistance to thiol-specific stress caused by electrophilic quinones. In terms of biological role, also exhibits azoreductase activity. Catalyzes the reductive cleavage of the azo bond in aromatic azo compounds to the corresponding amines. This chain is FMN-dependent NADH:quinone oxidoreductase, found in Geotalea uraniireducens (strain Rf4) (Geobacter uraniireducens).